Consider the following 704-residue polypeptide: Glycine--tRNA ligase beta subunit (704 aa).

It belongs to the class-II aminoacyl-tRNA synthetase family. In terms of assembly, tetramer of two alpha and two beta subunits.

Its subcellular location is the cytoplasm. The enzyme catalyses tRNA(Gly) + glycine + ATP = glycyl-tRNA(Gly) + AMP + diphosphate. The sequence is that of Glycine--tRNA ligase beta subunit from Rhizobium johnstonii (strain DSM 114642 / LMG 32736 / 3841) (Rhizobium leguminosarum bv. viciae).